The primary structure comprises 260 residues: MARGGAGRAVALGLVLRLLFGLRTGLEAAPAPAHTRVQVSGSRADSCPTDTFQCLTSGYCVPLSWRCDGDQDCSDGSDEEDCRIESCAQNGQCQPQSALPCSCDNISGCSDVSDKNLNCSRPPCQESELHCILDDVCIPHTWRCDGHPDCLDSSDELSCDTDTEIDKIFQEENATTTRISTTMENETSFRNVTFTSAGDSSRNPSAYGVIAAAGVLSAILVSATLLILLRLRGQGYLPPPGLLVAVKESLLLSERKTSLI.

The first 28 residues, 1-28 (MARGGAGRAVALGLVLRLLFGLRTGLEA), serve as a signal peptide directing secretion. At 29–208 (APAPAHTRVQ…DSSRNPSAYG (180 aa)) the chain is on the extracellular side. Residues 46–83 (SCPTDTFQCLTSGYCVPLSWRCDGDQDCSDGSDEEDCR) enclose the LDL-receptor class A 1 domain. Intrachain disulfides connect Cys47–Cys60, Cys54–Cys73, and Cys67–Cys82. 6 residues coordinate Ca(2+): Trp65, Asp68, Asp70, Asp72, Asp78, and Glu79. Asn118 is a glycosylation site (N-linked (GlcNAc...) asparagine). An LDL-receptor class A 2 domain is found at 123–160 (PCQESELHCILDDVCIPHTWRCDGHPDCLDSSDELSCD). Cystine bridges form between Cys124–Cys137, Cys131–Cys150, and Cys144–Cys159. Residues Trp142, Asp145, His147, Asp149, Asp155, and Glu156 each contribute to the Ca(2+) site. N-linked (GlcNAc...) asparagine glycosylation is present at Asn185. A helical membrane pass occupies residues 209–229 (VIAAAGVLSAILVSATLLILL). Residues 230–260 (RLRGQGYLPPPGLLVAVKESLLLSERKTSLI) are Cytoplasmic-facing.

Interacts (via LDL-receptor class A domains) with TCN2.

Its subcellular location is the cell membrane. Its function is as follows. Receptor for transcobalamin saturated with cobalamin (TCbl). Plays an important role in cobalamin uptake. Plasma membrane protein that is expressed on follicular dendritic cells (FDC) and mediates interaction with germinal center B cells. Functions as a costimulator to promote B cell responses to antigenic stimuli; promotes B cell differentiation and proliferation. Germinal center-B (GC-B) cells differentiate into memory B-cells and plasma cells (PC) through interaction with T-cells and follicular dendritic cells (FDC). CD320 augments the proliferation of PC precursors generated by IL-10. The sequence is that of CD320 antigen (Cd320) from Mus musculus (Mouse).